We begin with the raw amino-acid sequence, 136 residues long: Large ribosomal subunit protein uL16 (136 aa).

Belongs to the universal ribosomal protein uL16 family. As to quaternary structure, part of the 50S ribosomal subunit.

In terms of biological role, binds 23S rRNA and is also seen to make contacts with the A and possibly P site tRNAs. The sequence is that of Large ribosomal subunit protein uL16 from Mannheimia succiniciproducens (strain KCTC 0769BP / MBEL55E).